The primary structure comprises 377 residues: Chaperone protein DnaJ (377 aa).

One can recognise a J domain in the interval 5–69 (EFYDRLGVSK…QKRSAYDQYG (65 aa)). The segment at 133-215 (GVEKDVSYHR…CHGTGHEKET (83 aa)) adopts a CR-type zinc-finger fold. Zn(2+)-binding residues include Cys-146, Cys-149, Cys-163, Cys-166, Cys-189, Cys-192, Cys-203, and Cys-206. 4 CXXCXGXG motif repeats span residues 146–153 (CHTCAGSG), 163–170 (CGRCHGSG), 189–196 (CDVCHGSG), and 203–210 (CQTCHGTG).

It belongs to the DnaJ family. As to quaternary structure, homodimer. Requires Zn(2+) as cofactor.

The protein resides in the cytoplasm. In terms of biological role, participates actively in the response to hyperosmotic and heat shock by preventing the aggregation of stress-denatured proteins and by disaggregating proteins, also in an autonomous, DnaK-independent fashion. Unfolded proteins bind initially to DnaJ; upon interaction with the DnaJ-bound protein, DnaK hydrolyzes its bound ATP, resulting in the formation of a stable complex. GrpE releases ADP from DnaK; ATP binding to DnaK triggers the release of the substrate protein, thus completing the reaction cycle. Several rounds of ATP-dependent interactions between DnaJ, DnaK and GrpE are required for fully efficient folding. Also involved, together with DnaK and GrpE, in the DNA replication of plasmids through activation of initiation proteins. This Streptococcus uberis (strain ATCC BAA-854 / 0140J) protein is Chaperone protein DnaJ.